A 166-amino-acid polypeptide reads, in one-letter code: SPbeta prophage-derived uncharacterized protein YomO (166 aa).

The protein is SPbeta prophage-derived uncharacterized protein YomO (yomO) of Bacillus subtilis (strain 168).